A 100-amino-acid polypeptide reads, in one-letter code: NADH-quinone oxidoreductase subunit K 1 (100 aa).

3 helical membrane passes run 4–24 (LHSY…GVLV), 29–49 (IVIF…FIAL), and 60–80 (IFVF…LALM).

Belongs to the complex I subunit 4L family. As to quaternary structure, NDH-1 is composed of 14 different subunits. Subunits NuoA, H, J, K, L, M, N constitute the membrane sector of the complex.

Its subcellular location is the cell inner membrane. The enzyme catalyses a quinone + NADH + 5 H(+)(in) = a quinol + NAD(+) + 4 H(+)(out). NDH-1 shuttles electrons from NADH, via FMN and iron-sulfur (Fe-S) centers, to quinones in the respiratory chain. The immediate electron acceptor for the enzyme in this species is believed to be ubiquinone. Couples the redox reaction to proton translocation (for every two electrons transferred, four hydrogen ions are translocated across the cytoplasmic membrane), and thus conserves the redox energy in a proton gradient. This Geobacter sulfurreducens (strain ATCC 51573 / DSM 12127 / PCA) protein is NADH-quinone oxidoreductase subunit K 1.